We begin with the raw amino-acid sequence, 309 residues long: Methionyl-tRNA formyltransferase (309 aa).

Residue 112–115 (SLLP) participates in (6S)-5,6,7,8-tetrahydrofolate binding.

This sequence belongs to the Fmt family.

The enzyme catalyses L-methionyl-tRNA(fMet) + (6R)-10-formyltetrahydrofolate = N-formyl-L-methionyl-tRNA(fMet) + (6S)-5,6,7,8-tetrahydrofolate + H(+). Functionally, attaches a formyl group to the free amino group of methionyl-tRNA(fMet). The formyl group appears to play a dual role in the initiator identity of N-formylmethionyl-tRNA by promoting its recognition by IF2 and preventing the misappropriation of this tRNA by the elongation apparatus. This chain is Methionyl-tRNA formyltransferase, found in Bartonella quintana (strain Toulouse) (Rochalimaea quintana).